The chain runs to 324 residues: Antihemorrhagic factor cHLP-A (324 aa).

The signal sequence occupies residues 1–19 (MNSLVALVLLGQIIGSTLS). 2 Cystatin fetuin-A-type domains span residues 21–130 (QLGP…VKCK) and 141–254 (RNCP…SDCV). 6 disulfide bridges follow: C28–C315, C85–C96, C110–C129, C143–C146, C205–C217, and C230–C253. The N-linked (GlcNAc...) asparagine glycan is linked to N204. An N-linked (GlcNAc...) asparagine glycan is attached at N282.

The protein belongs to the fetuin family. As to quaternary structure, homodimer. As to expression, expressed by the liver.

The protein localises to the secreted. Its function is as follows. Potent inhibitor of hemorrhagic activity but also proteolytic activities. Inhibition occurs by formation of a non-covalent complex between this protein and the proteinases at their metalloproteinase domains. The sequence is that of Antihemorrhagic factor cHLP-A from Gloydius brevicauda (Korean slamosa snake).